Consider the following 687-residue polypeptide: Mediator of RNA polymerase II transcription subunit 17 (687 aa).

Over residues 30 to 43 (LSSNPNSSLHSPTS) the composition is skewed to low complexity. 2 disordered regions span residues 30-70 (LSSN…NKTK) and 130-189 (QLGS…ETDD). Basic and acidic residues-rich tracts occupy residues 56–70 (TSIR…NKTK), 136–147 (SDGHNSEKKDTD), and 167–183 (KDNP…KTNE).

This sequence belongs to the Mediator complex subunit 17 family. As to quaternary structure, component of the Mediator complex, which is composed of at least 21 subunits that form three structurally distinct submodules. The Mediator head module contains MED6, MED8, MED11, SRB4/MED17, SRB5/MED18, ROX3/MED19, SRB2/MED20 and SRB6/MED22, the middle module contains MED1, MED4, NUT1/MED5, MED7, CSE2/MED9, NUT2/MED10, SRB7/MED21 and SOH1/MED31, and the tail module contains MED2, PGD1/MED3, RGR1/MED14, GAL11/MED15 and SIN4/MED16. The head and the middle modules interact directly with RNA polymerase II, whereas the elongated tail module interacts with gene-specific regulatory proteins. The head module may also interact with the TFIIF complex. SRB4/MED17 interacts directly with MED6, MED11, ROX3/MED19, SRB2/MED20 and SRB6/MED22. Interacts directly with the activator GAL4.

It localises to the nucleus. Its function is as follows. Component of the Mediator complex, a coactivator involved in the regulated transcription of nearly all RNA polymerase II-dependent genes. Mediator functions as a bridge to convey information from gene-specific regulatory proteins to the basal RNA polymerase II transcription machinery. The Mediator complex, having a compact conformation in its free form, is recruited to promoters by direct interactions with regulatory proteins and serves for the assembly of a functional preinitiation complex with RNA polymerase II and the general transcription factors. The Mediator complex unfolds to an extended conformation and partially surrounds RNA polymerase II, specifically interacting with the unphosphorylated form of the C-terminal domain (CTD) of RNA polymerase II. The Mediator complex dissociates from the RNA polymerase II holoenzyme and stays at the promoter when transcriptional elongation begins. This chain is Mediator of RNA polymerase II transcription subunit 17 (SRB4), found in Saccharomyces cerevisiae (strain ATCC 204508 / S288c) (Baker's yeast).